Here is a 328-residue protein sequence, read N- to C-terminus: Tetraacyldisaccharide 4'-kinase (328 aa).

55-62 (TAGGNGKT) serves as a coordination point for ATP.

Belongs to the LpxK family.

It catalyses the reaction a lipid A disaccharide + ATP = a lipid IVA + ADP + H(+). It participates in glycolipid biosynthesis; lipid IV(A) biosynthesis; lipid IV(A) from (3R)-3-hydroxytetradecanoyl-[acyl-carrier-protein] and UDP-N-acetyl-alpha-D-glucosamine: step 6/6. Functionally, transfers the gamma-phosphate of ATP to the 4'-position of a tetraacyldisaccharide 1-phosphate intermediate (termed DS-1-P) to form tetraacyldisaccharide 1,4'-bis-phosphate (lipid IVA). This Yersinia pseudotuberculosis serotype I (strain IP32953) protein is Tetraacyldisaccharide 4'-kinase.